The sequence spans 78 residues: RNA-binding protein Hfq (78 aa).

A Sm domain is found at 10–69; that stretch reads DPFLNALRKEHVPVSIYLVNGIKLQGNIESFDQYVVLLRNTVTQMVYKHAISTVVPARPV.

The protein belongs to the Hfq family. In terms of assembly, homohexamer.

Its function is as follows. RNA chaperone that binds small regulatory RNA (sRNAs) and mRNAs to facilitate mRNA translational regulation in response to envelope stress, environmental stress and changes in metabolite concentrations. Also binds with high specificity to tRNAs. This chain is RNA-binding protein Hfq, found in Paraburkholderia phymatum (strain DSM 17167 / CIP 108236 / LMG 21445 / STM815) (Burkholderia phymatum).